The following is a 548-amino-acid chain: Membrane protein insertase YidC (548 aa).

Residues 6-26 (NLLVIALLFVSFMIWQAWEQD) traverse the membrane as a helical segment. The interval 28 to 55 (NPQPQAQQTTQTTTTAAGSAADQGVPAS) is disordered. Residues 30 to 50 (QPQAQQTTQTTTTAAGSAADQ) show a composition bias toward low complexity. 4 helical membrane passes run 350-370 (FVGN…GIMY), 420-440 (LGGC…YYML), 458-478 (LSAQ…MFFI), and 499-519 (PVIF…YYIV).

This sequence belongs to the OXA1/ALB3/YidC family. Type 1 subfamily. As to quaternary structure, interacts with the Sec translocase complex via SecD. Specifically interacts with transmembrane segments of nascent integral membrane proteins during membrane integration.

It is found in the cell inner membrane. Required for the insertion and/or proper folding and/or complex formation of integral membrane proteins into the membrane. Involved in integration of membrane proteins that insert both dependently and independently of the Sec translocase complex, as well as at least some lipoproteins. Aids folding of multispanning membrane proteins. The sequence is that of Membrane protein insertase YidC from Escherichia coli (strain K12 / MC4100 / BW2952).